The sequence spans 126 residues: Fluoride-specific ion channel FluC (126 aa).

Transmembrane regions (helical) follow at residues 3–23, 37–57, 68–88, and 101–121; these read PYLLLAVGTGGFVGAILRFLI, VGTLSVNVLGSFIIGFLALYF, LVITGMLGALTTFSTFSLETV, and TNITLNVFLCVVATMLGMMLF. Na(+) contacts are provided by glycine 75 and threonine 78.

This sequence belongs to the fluoride channel Fluc/FEX (TC 1.A.43) family.

It localises to the cell inner membrane. The enzyme catalyses fluoride(in) = fluoride(out). Na(+) is not transported, but it plays an essential structural role and its presence is essential for fluoride channel function. Its function is as follows. Fluoride-specific ion channel. Important for reducing fluoride concentration in the cell, thus reducing its toxicity. The chain is Fluoride-specific ion channel FluC from Sulfurovum sp. (strain NBC37-1).